We begin with the raw amino-acid sequence, 195 residues long: ATP-dependent Clp protease proteolytic subunit (195 aa).

Serine 101 (nucleophile) is an active-site residue. The active site involves histidine 126.

Belongs to the peptidase S14 family. Component of the chloroplastic Clp protease core complex.

It localises to the plastid. The protein resides in the chloroplast stroma. The enzyme catalyses Hydrolysis of proteins to small peptides in the presence of ATP and magnesium. alpha-casein is the usual test substrate. In the absence of ATP, only oligopeptides shorter than five residues are hydrolyzed (such as succinyl-Leu-Tyr-|-NHMec, and Leu-Tyr-Leu-|-Tyr-Trp, in which cleavage of the -Tyr-|-Leu- and -Tyr-|-Trp bonds also occurs).. In terms of biological role, cleaves peptides in various proteins in a process that requires ATP hydrolysis. Has a chymotrypsin-like activity. Plays a major role in the degradation of misfolded proteins. The protein is ATP-dependent Clp protease proteolytic subunit of Oltmannsiellopsis viridis (Marine flagellate).